A 424-amino-acid chain; its full sequence is Subtilisin-like protease 2 (424 aa).

Positions 1 to 17 (MQLLNLGLLLLLPFVAG) are cleaved as a signal peptide. Positions 18-123 (EIAPQPEPLR…VHPDQHVYLA (106 aa)) are excised as a propeptide. The region spanning 37–123 (QYIVTLKEGL…VHPDQHVYLA (87 aa)) is the Inhibitor I9 domain. In terms of domain architecture, Peptidase S8 spans 132 to 424 (RWGLGYMSSK…RKFTLPKNTK (293 aa)). Active-site charge relay system residues include Asp170 and His202. 3 N-linked (GlcNAc...) asparagine glycosylation sites follow: Asn249, Asn262, and Asn350. Residue Ser359 is the Charge relay system of the active site. N-linked (GlcNAc...) asparagine glycosylation occurs at Asn390.

Belongs to the peptidase S8 family.

The protein resides in the secreted. In terms of biological role, secreted subtilisin-like serine protease with keratinolytic activity that contributes to pathogenicity. In Arthroderma otae (Microsporum canis), this protein is Subtilisin-like protease 2 (SUB2).